Here is a 764-residue protein sequence, read N- to C-terminus: Probable cyclic nucleotide-gated ion channel 20, chloroplastic (764 aa).

A chloroplast-targeting transit peptide spans 1–25 (MASHNENDDIPMLPISDPSSRTRAR). The segment at 1-40 (MASHNENDDIPMLPISDPSSRTRARAFTSRSRSVSLSNPT) is disordered. Over residues 19 to 33 (SSRTRARAFTSRSRS) the composition is skewed to low complexity. Residues 26–204 (AFTSRSRSVS…PHAKEVQTWT (179 aa)) lie on the Stromal side of the membrane. A helical membrane pass occupies residues 205–225 (KFFALSCLLAIFIDPLFFFLI). Residues 226-242 (KVQEQNKCIMIDWPMTK) lie on the Lumenal side of the membrane. Residues 243–263 (AFVAVRSVTDVIFTMNILLQF) traverse the membrane as a helical segment. The Stromal segment spans residues 264 to 295 (RLAYVARESTVVGAGQLVSHPKKIALHYLKGK). The chain crosses the membrane as a helical span at residues 296–316 (FFLDLFIVMPLPQILILWIIP). Residues 317–329 (AHLGASGANYAKN) lie on the Lumenal side of the membrane. A helical transmembrane segment spans residues 330–350 (LLRAAVLFQYIPKLYRLLPFL). Residues 351 to 366 (AGQTPTGFIFESAWAN) are Stromal-facing. Residues 367–387 (FVINLLTFMLAGHVVGSCWYL) form a helical membrane-spanning segment. Over 388-488 (FGLQRVNQCL…GNQVPSYFLG (101 aa)) the chain is Lumenal. Residues 489–509 (EVFFTMGIIGLGLLLFALLIG) traverse the membrane as a helical segment. Residues 510 to 764 (NMQNFLQALG…LCTPQSSYSL (255 aa)) lie on the Stromal side of the membrane. A nucleoside 3',5'-cyclic phosphate is bound by residues 593-710 (IFSL…EDVT) and glutamate 658. The tract at residues 713-729 (FSRFLRSHRVQGAIRYD) is calmodulin-binding. One can recognise an IQ domain in the interval 734 to 763 (RLRAARQIQVAWRYRRRRLHRLCTPQSSYS).

Belongs to the cyclic nucleotide-gated cation channel (TC 1.A.1.5) family. As to quaternary structure, homotetramer or heterotetramer.

The protein resides in the plastid. It localises to the chloroplast thylakoid membrane. In terms of biological role, probable cyclic nucleotide-gated ion channel. This Arabidopsis thaliana (Mouse-ear cress) protein is Probable cyclic nucleotide-gated ion channel 20, chloroplastic (CNGC20).